The chain runs to 130 residues: Large ribosomal subunit protein bL12 (130 aa).

This sequence belongs to the bacterial ribosomal protein bL12 family. In terms of assembly, homodimer. Part of the ribosomal stalk of the 50S ribosomal subunit. Forms a multimeric L10(L12)X complex, where L10 forms an elongated spine to which 2 to 4 L12 dimers bind in a sequential fashion. Binds GTP-bound translation factors.

In terms of biological role, forms part of the ribosomal stalk which helps the ribosome interact with GTP-bound translation factors. Is thus essential for accurate translation. The sequence is that of Large ribosomal subunit protein bL12 from Nostoc sp. (strain PCC 7120 / SAG 25.82 / UTEX 2576).